Reading from the N-terminus, the 263-residue chain is Phosphonates import ATP-binding protein PhnC 1 (263 aa).

An ABC transporter domain is found at 3-248 (IQVENLWVAF…KEKELYFGEK (246 aa)). 37–44 (GPSGAGKS) contacts ATP.

It belongs to the ABC transporter superfamily. Phosphonates importer (TC 3.A.1.9.1) family. In terms of assembly, the complex is composed of two ATP-binding proteins (PhnC), two transmembrane proteins (PhnE) and a solute-binding protein (PhnD).

The protein resides in the cell inner membrane. It catalyses the reaction phosphonate(out) + ATP + H2O = phosphonate(in) + ADP + phosphate + H(+). Functionally, part of the ABC transporter complex PhnCDE involved in phosphonates import. Responsible for energy coupling to the transport system. The sequence is that of Phosphonates import ATP-binding protein PhnC 1 from Synechococcus sp. (strain JA-2-3B'a(2-13)) (Cyanobacteria bacterium Yellowstone B-Prime).